The primary structure comprises 176 residues: ATP-dependent protease subunit HslV (176 aa).

T6 is a catalytic residue. Na(+) is bound by residues S161, C164, and T167.

It belongs to the peptidase T1B family. HslV subfamily. In terms of assembly, a double ring-shaped homohexamer of HslV is capped on each side by a ring-shaped HslU homohexamer. The assembly of the HslU/HslV complex is dependent on binding of ATP.

It localises to the cytoplasm. It catalyses the reaction ATP-dependent cleavage of peptide bonds with broad specificity.. Allosterically activated by HslU binding. Its function is as follows. Protease subunit of a proteasome-like degradation complex believed to be a general protein degrading machinery. The polypeptide is ATP-dependent protease subunit HslV (Thermosipho melanesiensis (strain DSM 12029 / CIP 104789 / BI429)).